The chain runs to 678 residues: RxLR effector protein PITG_16705 (678 aa).

Residues Met-1–Ala-20 form the signal peptide. The RxLR-dEER motif lies at Arg-46–Arg-61.

This sequence belongs to the RxLR effector family.

The protein localises to the secreted. The protein resides in the host cytoplasm. In terms of biological role, effector that enhances P.infestans colonization of Nicotiana benthamiana leaves. The sequence is that of RxLR effector protein PITG_16705 from Phytophthora infestans (strain T30-4) (Potato late blight agent).